The following is a 329-amino-acid chain: Mitochondrial nuclease (329 aa).

His138 serves as the catalytic Proton acceptor. A Mg(2+)-binding site is contributed by Asn170.

This sequence belongs to the DNA/RNA non-specific endonuclease family. As to quaternary structure, homodimer. Requires Mn(2+) as cofactor. It depends on Mg(2+) as a cofactor.

Its subcellular location is the mitochondrion inner membrane. Functionally, this enzyme has both RNase and DNase activity. This Saccharomyces cerevisiae (strain ATCC 204508 / S288c) (Baker's yeast) protein is Mitochondrial nuclease (NUC1).